The sequence spans 335 residues: Trans-1,2-dihydrobenzene-1,2-diol dehydrogenase (335 aa).

Belongs to the Gfo/Idh/MocA family. Homodimer. Liver, lens, spleen, kidney and small intestine.

The catalysed reaction is (1R,2R)-1,2-dihydrobenzene-1,2-diol + NADP(+) = catechol + NADPH + H(+). The enzyme catalyses D-xylose + NADP(+) = D-xylono-1,5-lactone + NADPH + H(+). Strongly inhibited by isoascorbic acid, 4-hydroxyacetophenone and chloromercuriphenylsulphonate. Stimulated by various salts. This is Trans-1,2-dihydrobenzene-1,2-diol dehydrogenase (DHDH) from Sus scrofa (Pig).